A 430-amino-acid chain; its full sequence is Maintenance of mitochondrial morphology protein 1 (430 aa).

At 1–70 (MSQGLIETTT…NGNTWSFTQG (70 aa)) the chain is on the lumenal side. Residues 71–91 (LVIGQISVIFIIIVFVKFFVF) form a helical membrane-spanning segment. At 92 to 430 (ADSSSHIPTK…TPGEFVNSNI (339 aa)) the chain is on the cytoplasmic side. An SMP-LTD domain is found at 159-387 (ASESLDWFNV…EPRFQVVRLP (229 aa)). Residues 305–326 (GYSKENGSADSASDNDEDEDDG) form a disordered region. Acidic residues predominate over residues 317–326 (SDNDEDEDDG).

This sequence belongs to the MMM1 family. As to quaternary structure, homodimer. Component of the ER-mitochondria encounter structure (ERMES) or MDM complex, composed of MMM1, MDM10, MDM12 and MDM34. An MMM1 homodimer associates with one molecule of MDM12 on each side in a pairwise head-to-tail manner, and the SMP-LTD domains of MMM1 and MDM12 generate a continuous hydrophobic tunnel for phospholipid trafficking.

It is found in the endoplasmic reticulum membrane. In terms of biological role, component of the ERMES/MDM complex, which serves as a molecular tether to connect the endoplasmic reticulum (ER) and mitochondria. Components of this complex are involved in the control of mitochondrial shape and protein biogenesis, and function in nonvesicular lipid trafficking between the ER and mitochondria. The MDM12-MMM1 subcomplex functions in the major beta-barrel assembly pathway that is responsible for biogenesis of all outer membrane beta-barrel proteins, and acts in a late step after the SAM complex. The MDM10-MDM12-MMM1 subcomplex further acts in the TOM40-specific pathway after the action of the MDM12-MMM1 complex. Essential for establishing and maintaining the structure of mitochondria and maintenance of mtDNA nucleoids. The sequence is that of Maintenance of mitochondrial morphology protein 1 from Candida dubliniensis (strain CD36 / ATCC MYA-646 / CBS 7987 / NCPF 3949 / NRRL Y-17841) (Yeast).